Here is a 140-residue protein sequence, read N- to C-terminus: Methylglyoxal synthase (140 aa).

The MGS-like domain maps to 1-140; sequence MNIALIAHDE…KERQEKEGTP (140 aa). Residues His8, Lys12, 34-37, and 54-55 each bind substrate; these read TGTT and SG. Catalysis depends on Asp60, which acts as the Proton donor/acceptor. His87 is a binding site for substrate.

It belongs to the methylglyoxal synthase family.

It carries out the reaction dihydroxyacetone phosphate = methylglyoxal + phosphate. Catalyzes the formation of methylglyoxal from dihydroxyacetone phosphate. The polypeptide is Methylglyoxal synthase (Oceanobacillus iheyensis (strain DSM 14371 / CIP 107618 / JCM 11309 / KCTC 3954 / HTE831)).